Consider the following 630-residue polypeptide: Membrane protein insertase YidC (630 aa).

5 helical membrane-spanning segments follow: residues 10 to 30 (LMFLVCAFAILIGYQFLVMGP), 396 to 416 (MVGNFGVAIMLLTVALKLILF), 470 to 490 (VPMLIQIPIFYSLYKVLTVTI), 528 to 548 (LIGAFLSGPLHIGVWPLLYGF), and 571 to 591 (FFPIVFTFTLSQFAVGLVIYW).

The protein belongs to the OXA1/ALB3/YidC family. Type 1 subfamily. As to quaternary structure, interacts with the Sec translocase complex via SecD. Specifically interacts with transmembrane segments of nascent integral membrane proteins during membrane integration.

The protein localises to the cell inner membrane. Its function is as follows. Required for the insertion and/or proper folding and/or complex formation of integral membrane proteins into the membrane. Involved in integration of membrane proteins that insert both dependently and independently of the Sec translocase complex, as well as at least some lipoproteins. Aids folding of multispanning membrane proteins. The sequence is that of Membrane protein insertase YidC from Caulobacter sp. (strain K31).